The following is a 158-amino-acid chain: NAD(P)H-quinone oxidoreductase subunit J, chloroplastic (158 aa).

It belongs to the complex I 30 kDa subunit family. NDH is composed of at least 16 different subunits, 5 of which are encoded in the nucleus.

The protein resides in the plastid. Its subcellular location is the chloroplast thylakoid membrane. It carries out the reaction a plastoquinone + NADH + (n+1) H(+)(in) = a plastoquinol + NAD(+) + n H(+)(out). It catalyses the reaction a plastoquinone + NADPH + (n+1) H(+)(in) = a plastoquinol + NADP(+) + n H(+)(out). Its function is as follows. NDH shuttles electrons from NAD(P)H:plastoquinone, via FMN and iron-sulfur (Fe-S) centers, to quinones in the photosynthetic chain and possibly in a chloroplast respiratory chain. The immediate electron acceptor for the enzyme in this species is believed to be plastoquinone. Couples the redox reaction to proton translocation, and thus conserves the redox energy in a proton gradient. This Liriodendron tulipifera (Tuliptree) protein is NAD(P)H-quinone oxidoreductase subunit J, chloroplastic.